The sequence spans 103 residues: Flagellar hook-basal body complex protein FliE (103 aa).

The protein belongs to the FliE family.

Its subcellular location is the bacterial flagellum basal body. The polypeptide is Flagellar hook-basal body complex protein FliE (Helicobacter hepaticus (strain ATCC 51449 / 3B1)).